Reading from the N-terminus, the 131-residue chain is Fluoride-specific ion channel FluC 1 (131 aa).

The next 4 membrane-spanning stretches (helical) occupy residues 4–24 (LALP…GAWL), 40–60 (HWGT…VLAL), 73–93 (LILL…TFAV), and 108–128 (LVLA…GVGL). G83 and S86 together coordinate Na(+).

The protein belongs to the fluoride channel Fluc/FEX (TC 1.A.43) family.

It is found in the cell inner membrane. It carries out the reaction fluoride(in) = fluoride(out). With respect to regulation, na(+) is not transported, but it plays an essential structural role and its presence is essential for fluoride channel function. Its function is as follows. Fluoride-specific ion channel. Important for reducing fluoride concentration in the cell, thus reducing its toxicity. This is Fluoride-specific ion channel FluC 1 from Prochlorococcus marinus (strain MIT 9313).